The primary structure comprises 404 residues: Cysteine desulfurase IscS (404 aa).

Pyridoxal 5'-phosphate is bound by residues alanine 75–threonine 76, asparagine 155, glutamine 183, and serine 203–histidine 205. Residue lysine 206 is modified to N6-(pyridoxal phosphate)lysine. Threonine 243 serves as a coordination point for pyridoxal 5'-phosphate. Cysteine 328 serves as the catalytic Cysteine persulfide intermediate. [2Fe-2S] cluster is bound at residue cysteine 328.

The protein belongs to the class-V pyridoxal-phosphate-dependent aminotransferase family. NifS/IscS subfamily. In terms of assembly, homodimer. Forms a heterotetramer with IscU, interacts with other sulfur acceptors. The cofactor is pyridoxal 5'-phosphate.

It is found in the cytoplasm. It catalyses the reaction (sulfur carrier)-H + L-cysteine = (sulfur carrier)-SH + L-alanine. Its pathway is cofactor biosynthesis; iron-sulfur cluster biosynthesis. Functionally, master enzyme that delivers sulfur to a number of partners involved in Fe-S cluster assembly, tRNA modification or cofactor biosynthesis. Catalyzes the removal of elemental sulfur atoms from cysteine to produce alanine. Functions as a sulfur delivery protein for Fe-S cluster synthesis onto IscU, an Fe-S scaffold assembly protein, as well as other S acceptor proteins. The protein is Cysteine desulfurase IscS of Pasteurella multocida (strain Pm70).